The following is a 100-amino-acid chain: Replication restart protein PriB (100 aa).

The SSB domain occupies Met1–Lys99.

It belongs to the PriB family. In terms of assembly, homodimer. Interacts with PriA and DnaT. Component of the replication restart primosome. Primosome assembly occurs via a 'hand-off' mechanism. PriA binds to replication forks, subsequently PriB then DnaT bind; DnaT then displaces ssDNA to generate the helicase loading substrate.

Involved in the restart of stalled replication forks, which reloads the replicative helicase on sites other than the origin of replication; the PriA-PriB pathway is the major replication restart pathway. During primosome assembly it facilitates complex formation between PriA and DnaT on DNA; stabilizes PriA on DNA. Stimulates the DNA unwinding activity of PriA helicase. This is Replication restart protein PriB from Neisseria meningitidis serogroup C (strain 053442).